The primary structure comprises 333 residues: GTPase Obg (333 aa).

The Obg domain maps to 1-159; the sequence is MKFIDQTIIQ…RDIQLELILI (159 aa). The OBG-type G domain occupies 160–332; it reads ADVGTLGMPN…LCSDIAFYLQ (173 aa). GTP contacts are provided by residues 166-173, 191-195, 212-215, 282-285, and 313-315; these read GMPNAGKS, FTTLN, DIPG, NKID, and SSI. Positions 173 and 193 each coordinate Mg(2+).

Belongs to the TRAFAC class OBG-HflX-like GTPase superfamily. OBG GTPase family. As to quaternary structure, monomer. Mg(2+) serves as cofactor.

It is found in the cytoplasm. Its function is as follows. An essential GTPase which binds GTP, GDP and possibly (p)ppGpp with moderate affinity, with high nucleotide exchange rates and a fairly low GTP hydrolysis rate. Plays a role in control of the cell cycle, stress response, ribosome biogenesis and in those bacteria that undergo differentiation, in morphogenesis control. The chain is GTPase Obg from Buchnera aphidicola subsp. Schizaphis graminum (strain Sg).